A 366-amino-acid polypeptide reads, in one-letter code: Aminomethyltransferase (366 aa).

It belongs to the GcvT family. As to quaternary structure, the glycine cleavage system is composed of four proteins: P, T, L and H.

It catalyses the reaction N(6)-[(R)-S(8)-aminomethyldihydrolipoyl]-L-lysyl-[protein] + (6S)-5,6,7,8-tetrahydrofolate = N(6)-[(R)-dihydrolipoyl]-L-lysyl-[protein] + (6R)-5,10-methylene-5,6,7,8-tetrahydrofolate + NH4(+). Its function is as follows. The glycine cleavage system catalyzes the degradation of glycine. The chain is Aminomethyltransferase from Bacillus cytotoxicus (strain DSM 22905 / CIP 110041 / 391-98 / NVH 391-98).